Consider the following 274-residue polypeptide: NH(3)-dependent NAD(+) synthetase (274 aa).

46 to 53 is an ATP binding site; it reads GISGGQDS. Asp-52 serves as a coordination point for Mg(2+). Arg-140 provides a ligand contact to deamido-NAD(+). Thr-160 contacts ATP. Glu-165 provides a ligand contact to Mg(2+). Deamido-NAD(+) is bound by residues Lys-173 and Asp-180. 2 residues coordinate ATP: Lys-189 and Thr-211. 260–261 lines the deamido-NAD(+) pocket; the sequence is HK.

The protein belongs to the NAD synthetase family. Homodimer.

It catalyses the reaction deamido-NAD(+) + NH4(+) + ATP = AMP + diphosphate + NAD(+) + H(+). It participates in cofactor biosynthesis; NAD(+) biosynthesis; NAD(+) from deamido-NAD(+) (ammonia route): step 1/1. In terms of biological role, catalyzes the ATP-dependent amidation of deamido-NAD to form NAD. Uses ammonia as a nitrogen source. This chain is NH(3)-dependent NAD(+) synthetase, found in Streptococcus pneumoniae serotype 2 (strain D39 / NCTC 7466).